A 245-amino-acid polypeptide reads, in one-letter code: 1-(5-phosphoribosyl)-5-[(5-phosphoribosylamino)methylideneamino] imidazole-4-carboxamide isomerase 1 (245 aa).

Catalysis depends on aspartate 7, which acts as the Proton acceptor. The Proton donor role is filled by aspartate 129.

This sequence belongs to the HisA/HisF family.

The protein localises to the cytoplasm. It carries out the reaction 1-(5-phospho-beta-D-ribosyl)-5-[(5-phospho-beta-D-ribosylamino)methylideneamino]imidazole-4-carboxamide = 5-[(5-phospho-1-deoxy-D-ribulos-1-ylimino)methylamino]-1-(5-phospho-beta-D-ribosyl)imidazole-4-carboxamide. It participates in amino-acid biosynthesis; L-histidine biosynthesis; L-histidine from 5-phospho-alpha-D-ribose 1-diphosphate: step 4/9. This is 1-(5-phosphoribosyl)-5-[(5-phosphoribosylamino)methylideneamino] imidazole-4-carboxamide isomerase 1 (hisA1) from Photorhabdus laumondii subsp. laumondii (strain DSM 15139 / CIP 105565 / TT01) (Photorhabdus luminescens subsp. laumondii).